The sequence spans 143 residues: uncharacterized protein (143 aa).

The next 2 helical transmembrane spans lie at 16–36 and 48–68; these read LIFAQIFIGCLMYFMLIIFVW and ICYIIIFAIIDFVVCFKFIYV. An N-linked (GlcNAc...) asparagine; by host glycan is attached at asparagine 71.

It is found in the membrane. This is an uncharacterized protein from Acanthamoeba polyphaga (Amoeba).